We begin with the raw amino-acid sequence, 563 residues long: Glutamate--tRNA ligase (563 aa).

Positions 61-94 (PEEQQKEVESLGGLEQHTKKEEKPKGLPELKNTE) are disordered. The segment covering 76–94 (QHTKKEEKPKGLPELKNTE) has biased composition (basic and acidic residues). Positions 104–114 (PNPSGPLHIGH) match the 'HIGH' region motif.

The protein belongs to the class-I aminoacyl-tRNA synthetase family. Glutamate--tRNA ligase type 2 subfamily.

It is found in the cytoplasm. The enzyme catalyses tRNA(Glu) + L-glutamate + ATP = L-glutamyl-tRNA(Glu) + AMP + diphosphate. In terms of biological role, catalyzes the attachment of glutamate to tRNA(Glu) in a two-step reaction: glutamate is first activated by ATP to form Glu-AMP and then transferred to the acceptor end of tRNA(Glu). In Methanosphaera stadtmanae (strain ATCC 43021 / DSM 3091 / JCM 11832 / MCB-3), this protein is Glutamate--tRNA ligase.